Here is a 335-residue protein sequence, read N- to C-terminus: Glyceraldehyde-3-phosphate dehydrogenase (335 aa).

Residues 10–11 (RI), D31, R75, and T122 contribute to the NAD(+) site. Residues 152–154 (SCT) and T183 contribute to the D-glyceraldehyde 3-phosphate site. C153 (nucleophile) is an active-site residue. N184 provides a ligand contact to NAD(+). D-glyceraldehyde 3-phosphate is bound by residues R198, 211-212 (TG), and R234. Residue N318 coordinates NAD(+).

The protein belongs to the glyceraldehyde-3-phosphate dehydrogenase family. In terms of assembly, homotetramer.

It is found in the cytoplasm. The enzyme catalyses D-glyceraldehyde 3-phosphate + phosphate + NAD(+) = (2R)-3-phospho-glyceroyl phosphate + NADH + H(+). The protein operates within carbohydrate degradation; glycolysis; pyruvate from D-glyceraldehyde 3-phosphate: step 1/5. Functionally, catalyzes the oxidative phosphorylation of glyceraldehyde 3-phosphate (G3P) to 1,3-bisphosphoglycerate (BPG) using the cofactor NAD. The first reaction step involves the formation of a hemiacetal intermediate between G3P and a cysteine residue, and this hemiacetal intermediate is then oxidized to a thioester, with concomitant reduction of NAD to NADH. The reduced NADH is then exchanged with the second NAD, and the thioester is attacked by a nucleophilic inorganic phosphate to produce BPG. The protein is Glyceraldehyde-3-phosphate dehydrogenase (gap) of Borreliella burgdorferi (strain ATCC 35210 / DSM 4680 / CIP 102532 / B31) (Borrelia burgdorferi).